We begin with the raw amino-acid sequence, 335 residues long: UPF0353 protein Mflv_3659 (335 aa).

The next 2 helical transmembrane spans lie at 18–38 and 67–87; these read WFFL…VVQL and LPAV…AGPT. The VWFA domain maps to 98–294; it reads VVMLVIDVSQ…EQLKQVFTNL (197 aa). A helical membrane pass occupies residues 309 to 329; it reads VGWLRLGAGVLALAALGALLI.

This sequence belongs to the UPF0353 family.

Its subcellular location is the cell membrane. This chain is UPF0353 protein Mflv_3659, found in Mycolicibacterium gilvum (strain PYR-GCK) (Mycobacterium gilvum (strain PYR-GCK)).